Consider the following 551-residue polypeptide: Putative BTB/POZ domain-containing protein L76 (551 aa).

The 72-residue stretch at 19–90 folds into the BTB domain; it reads TDIILEIEDD…FYGQENDVID (72 aa).

Belongs to the mimivirus BTB/WD family.

This Acanthamoeba polyphaga (Amoeba) protein is Putative BTB/POZ domain-containing protein L76.